The sequence spans 82 residues: Small ribosomal subunit protein eS27A (82 aa).

The segment at 37–59 (CPGCLNITTVFSHAQTAVTCESC) adopts a C4-type zinc-finger fold. Position 40 is an S-methylcysteine (cysteine 40).

This sequence belongs to the eukaryotic ribosomal protein eS27 family. Component of the small ribosomal subunit (SSU). Mature yeast ribosomes consist of a small (40S) and a large (60S) subunit. The 40S small subunit contains 1 molecule of ribosomal RNA (18S rRNA) and 33 different proteins (encoded by 57 genes). The large 60S subunit contains 3 rRNA molecules (25S, 5.8S and 5S rRNA) and 46 different proteins (encoded by 81 genes). The cofactor is Zn(2+). The N-terminus is not modified.

The protein resides in the cytoplasm. Component of the ribosome, a large ribonucleoprotein complex responsible for the synthesis of proteins in the cell. The small ribosomal subunit (SSU) binds messenger RNAs (mRNAs) and translates the encoded message by selecting cognate aminoacyl-transfer RNA (tRNA) molecules. The large subunit (LSU) contains the ribosomal catalytic site termed the peptidyl transferase center (PTC), which catalyzes the formation of peptide bonds, thereby polymerizing the amino acids delivered by tRNAs into a polypeptide chain. The nascent polypeptides leave the ribosome through a tunnel in the LSU and interact with protein factors that function in enzymatic processing, targeting, and the membrane insertion of nascent chains at the exit of the ribosomal tunnel. This is Small ribosomal subunit protein eS27A from Saccharomyces cerevisiae (strain ATCC 204508 / S288c) (Baker's yeast).